Reading from the N-terminus, the 729-residue chain is Carbon monoxide dehydrogenase/acetyl-CoA synthase subunit alpha (729 aa).

C506, C509, C518, and C528 together coordinate [4Fe-4S] cluster. Residue C509 coordinates Ni(2+). Ni(2+)-binding residues include C595, G596, and C597.

As to quaternary structure, tetramer of two alpha and two beta chains. It depends on Ni cation as a cofactor. Requires [4Fe-4S] cluster as cofactor.

It carries out the reaction Co(I)-[corrinoid Fe-S protein] + acetyl-CoA + H(+) = methyl-Co(III)-[corrinoid Fe-S protein] + CO + CoA. Its function is as follows. The beta subunit generates CO from CO(2), while the alpha subunit (this protein) combines the CO with CoA and a methyl group to form acetyl-CoA. The methyl group, which is incorporated into acetyl-CoA, is transferred to the alpha subunit by a corrinoid iron-sulfur protein. The protein is Carbon monoxide dehydrogenase/acetyl-CoA synthase subunit alpha of Moorella thermoacetica (Clostridium thermoaceticum).